Consider the following 149-residue polypeptide: C-type lectin domain family 2 member B (149 aa).

Residues 1–7 (MMTKHKK) lie on the Cytoplasmic side of the membrane. Residues 8–25 (CFIIVGVLITTNIITLIV) form a helical; Signal-anchor for type II membrane protein membrane-spanning segment. Topologically, residues 26-149 (KLTRDSQSLC…RKWICRKRIH (124 aa)) are extracellular. A disulfide bond links Cys35 and Cys46. Residues 42–145 (FQNKCYYFSK…CYTERKWICR (104 aa)) enclose the C-type lectin domain. 3 N-linked (GlcNAc...) asparagine glycosylation sites follow: Asn57, Asn62, and Asn100. Cystine bridges form between Cys63-Cys144 and Cys123-Cys136.

In terms of assembly, homodimer. Interacts with NKp80/KLRF1. Post-translationally, (Microbial infection) Ubiquitinated by human herpesvirus 8 protein K5, leading to endolysosomal degradation. N-linked glycosylated; required to enable surface expression and the extent of surface expression correlates with the number of functional conventional N-glycosylation sites. As to expression, expressed preferentially in lymphoid tissues, and in most hematopoietic cell types.

Its subcellular location is the cell membrane. The protein localises to the golgi apparatus membrane. In terms of biological role, membrane-bound protein expressed on myeloid cells which acts as a ligand to stimulate the activating receptor NKp80/KLRF1, expressed on the surface of natural killer (NK) cells. In turn, stimulates NK-cell cytotoxicity and cytokine production leading to the cytolysis of malignant CLEC2B-expressing myeloid cells. The polypeptide is C-type lectin domain family 2 member B (CLEC2B) (Homo sapiens (Human)).